We begin with the raw amino-acid sequence, 1120 residues long: ELKS/Rab6-interacting/CAST family member 1 (1120 aa).

Residues Met-1–Leu-54 form a disordered region. N6-acetyllysine is present on Lys-10. Residues Pro-13–Pro-28 show a composition bias toward low complexity. Ser-17, Ser-21, and Ser-37 each carry phosphoserine. A Phosphothreonine modification is found at Thr-38. Over residues Gly-40–Gly-51 the composition is skewed to gly residues. 6 positions are modified to phosphoserine: Ser-55, Ser-75, Ser-94, Ser-824, Leu-965, and Ser-1009. Residues Arg-144 to Glu-992 adopt a coiled-coil conformation. The segment covering Lys-801–Ser-824 has biased composition (basic and acidic residues). The interval Lys-801–Asp-840 is disordered. Thr-1050 is subject to Phosphothreonine. Residues Thr-1050–Val-1112 form the FIP-RBD domain. A coiled-coil region spans residues Glu-1060 to His-1104.

As to quaternary structure, interacts with the GTB-bound forms of RAB6A isoform 1 and isoform 2 and with RAB6B. The interaction was strongest with RAB6B, followed by RAB6A isoform 2 and weakest with RAB6A isoform 1. Part of a complex with CHUK, IKBKB and IKBKG. Interacts with CHUK, IKBKB and IKBKG. The interaction with IKBKG is independent of CHUK and IKBKB. Interacts with NFKBIA. Isoform 2 interacts through its C-terminus with the PDZ domains of RIMS1 and RIMS2. Interacts with ERC2/CAST1. Interacts with SDCCAG8. Part of a cortical microtubule stabilization complex (CMSC) composed of KANK1, PPFIA1, PPFIBP1, ERC1/ELKS, PHLDB2/LL5beta, CLASPs, KIF21A and possibly additional interactors; within CMSCs KANK1 and PHLDB2/LL5beta appear to be the core components for targeting of microtubule-binding proteins KIF21A and CLASPs, whereas PPFIA1, PPFIBP1 and ERC1/ELKS serve as scaffolds for protein clustering. Widely expressed.

It localises to the cytoplasm. Its subcellular location is the cytoskeleton. It is found in the microtubule organizing center. The protein localises to the centrosome. The protein resides in the membrane. It localises to the golgi apparatus membrane. Its subcellular location is the presynaptic active zone. It is found in the cell projection. The protein localises to the podosome. In terms of biological role, regulatory subunit of the IKK complex. Probably recruits IkappaBalpha/NFKBIA to the complex. May be involved in the organization of the cytomatrix at the nerve terminals active zone (CAZ) which regulates neurotransmitter release. May be involved in vesicle trafficking at the CAZ. May be involved in Rab-6 regulated endosomes to Golgi transport. The polypeptide is ELKS/Rab6-interacting/CAST family member 1 (Mus musculus (Mouse)).